Reading from the N-terminus, the 170-residue chain is MPRSRINGNFIDKTSSIVANILLQIIPTTSGEKRAFTYYRDGMLAQSEGNYAEALQNYYEATRLEIDPYDRSYILYNIGLIHTSNGEHTKALEYYFRALERNPFLPQAFNNMAVICHYRGEQAILQGDSEIAEAWFDQAAEYWKQAIALTPGNYIEAQNWLKITKRFEFE.

TPR repeat units follow at residues 35-68 (AFTY…EIDP), 72-105 (SYIL…NPFL), and 120-153 (GEQA…TPGN).

This sequence belongs to the Ycf3 family.

The protein localises to the plastid. The protein resides in the chloroplast thylakoid membrane. Functionally, essential for the assembly of the photosystem I (PSI) complex. May act as a chaperone-like factor to guide the assembly of the PSI subunits. The protein is Photosystem I assembly protein Ycf3 of Saccharum officinarum (Sugarcane).